A 356-amino-acid polypeptide reads, in one-letter code: Protein RecA (356 aa).

Residue 68 to 75 (GQESSGKT) participates in ATP binding.

Belongs to the RecA family.

It localises to the cytoplasm. Its function is as follows. Can catalyze the hydrolysis of ATP in the presence of single-stranded DNA, the ATP-dependent uptake of single-stranded DNA by duplex DNA, and the ATP-dependent hybridization of homologous single-stranded DNAs. It interacts with LexA causing its activation and leading to its autocatalytic cleavage. The polypeptide is Protein RecA (Thermotoga sp. (strain RQ2)).